A 419-amino-acid polypeptide reads, in one-letter code: Mitochondrial chaperone BCS1 (419 aa).

Over 2 to 15 the chain is Mitochondrial intermembrane; it reads PLSDFILALKDNPY. A helical transmembrane segment spans residues 16 to 32; the sequence is FGAGFGLVGVGTALALA. Over 33 to 419 the chain is Mitochondrial matrix; the sequence is RKGVQLGLVA…AIHNAESLRR (387 aa). A Phosphotyrosine modification is found at tyrosine 181. 230–237 lines the ATP pocket; it reads GPPGCGKS.

Belongs to the AAA ATPase family. BCS1 subfamily. As to quaternary structure, interacts with LETM1. Ubiquitous.

It is found in the mitochondrion inner membrane. It carries out the reaction ATP + H2O = ADP + phosphate + H(+). Functionally, chaperone necessary for the incorporation of Rieske iron-sulfur protein UQCRFS1 into the mitochondrial respiratory chain complex III. Plays an important role in the maintenance of mitochondrial tubular networks, respiratory chain assembly and formation of the LETM1 complex. This chain is Mitochondrial chaperone BCS1 (BCS1L), found in Homo sapiens (Human).